The primary structure comprises 140 residues: Hemoglobin subunit alpha (140 aa).

The 140-residue stretch at 1-140 folds into the Globin domain; sequence LSAADKGHVK…VSTVLTSKYR (140 aa). Residue S2 is modified to Phosphoserine. K6 and K10 each carry N6-succinyllysine. K15 carries the post-translational modification N6-acetyllysine; alternate. N6-succinyllysine; alternate is present on K15. The residue at position 23 (Y23) is a Phosphotyrosine. At S34 the chain carries Phosphoserine. N6-succinyllysine is present on K39. S48 carries the phosphoserine modification. O2 is bound at residue H57. H86 is a heme b binding site. At S101 the chain carries Phosphoserine. The residue at position 107 (T107) is a Phosphothreonine. Phosphoserine is present on S123. T133 and T136 each carry phosphothreonine. At S137 the chain carries Phosphoserine.

This sequence belongs to the globin family. In terms of assembly, heterotetramer of two alpha chains and two beta chains. In terms of tissue distribution, red blood cells.

In terms of biological role, involved in oxygen transport from the lung to the various peripheral tissues. Functionally, hemopressin acts as an antagonist peptide of the cannabinoid receptor CNR1. Hemopressin-binding efficiently blocks cannabinoid receptor CNR1 and subsequent signaling. This chain is Hemoglobin subunit alpha (HBA), found in Tragelaphus strepsiceros (Greater kudu).